The primary structure comprises 229 residues: Platelet-activating factor acetylhydrolase IB subunit alpha2 (229 aa).

N-acetylserine is present on S2. Phosphoserine is present on S2. S48 is a catalytic residue. S64 bears the Phosphoserine mark. Catalysis depends on residues D193 and H196. T220 bears the Phosphothreonine mark.

This sequence belongs to the 'GDSL' lipolytic enzyme family. Platelet-activating factor acetylhydrolase IB beta/gamma subunits subfamily. As to quaternary structure, forms a catalytic dimer which is either homodimer (alpha2/alpha2 homodimer) or heterodimer with PAFAH1B3 (alpha2/alpha1 heterodimer). Component of the cytosolic (PAF-AH (I)) heterotetrameric enzyme, which is composed of PAFAH1B1 (beta), PAFAH1B2 (alpha2) and PAFAH1B3 (alpha1) subunits. The catalytic activity of the enzyme resides in the alpha1 (PAFAH1B3) and alpha2 (PAFAH1B2) subunits, whereas the beta subunit (PAFAH1B1) has regulatory activity. Trimer formation is not essential for the catalytic activity. Interacts (homodimer form) with PAFAH1B1 (homodimer form); PAFAH1B2 competes with NDEL1 for PAFAH1B1 binding. Interacts with VLDLR; this interaction may modulate the Reelin pathway.

Its subcellular location is the cytoplasm. It carries out the reaction a 1-O-alkyl-2-acetyl-sn-glycero-3-phosphocholine + H2O = a 1-O-alkyl-sn-glycero-3-phosphocholine + acetate + H(+). The enzyme catalyses 1-O-hexadecyl-2-acetyl-sn-glycero-3-phosphocholine + H2O = 1-O-hexadecyl-sn-glycero-3-phosphocholine + acetate + H(+). It catalyses the reaction 1-O-hexadecyl-2-acetyl-sn-glycero-3-phosphate + H2O = 1-O-hexadecyl-sn-glycero-3-phosphate + acetate + H(+). The catalysed reaction is 1-O-hexadecyl-2-acetyl-sn-glycero-3-phosphoethanolamine + H2O = 1-O-hexadecyl-sn-glycero-3-phosphoethanolamine + acetate + H(+). Its activity is regulated as follows. Beta subunit (PAFAH1B1) stimulates the acetylhydrolase activity of the alpha2/alpha2 catalytic homodimer. In terms of biological role, alpha2 catalytic subunit of the cytosolic type I platelet-activating factor (PAF) acetylhydrolase (PAF-AH (I)) heterotetrameric enzyme that catalyzes the hydrolyze of the acetyl group at the sn-2 position of PAF and its analogs and modulates the action of PAF. The activity and substrate specificity of PAF-AH (I) are affected by its subunit composition. The alpha2/alpha2 homodimer (PAFAH1B2/PAFAH1B2 homodimer) hydrolyzes PAF and 1-O-alkyl-2-acetyl-sn-glycero-3-phosphorylethanolamine (AAGPE) more efficiently than 1-O-alkyl-2-acetyl-sn-glycero-3-phosphoric acid (AAGPA). In contrast, the alpha1/alpha2 heterodimer(PAFAH1B3/PAFAH1B3 heterodimer) hydrolyzes AAGPA more efficiently than PAF, but has little hydrolytic activity towards AAGPE. May play a role in male germ cell meiosis during the late pachytenestage and meiotic divisions as well as early spermiogenesis. This Mus musculus (Mouse) protein is Platelet-activating factor acetylhydrolase IB subunit alpha2.